Reading from the N-terminus, the 61-residue chain is Small ribosomal subunit protein uS14B (61 aa).

Zn(2+) contacts are provided by Cys24, Cys27, Cys40, and Cys43.

The protein belongs to the universal ribosomal protein uS14 family. Zinc-binding uS14 subfamily. Part of the 30S ribosomal subunit. Contacts proteins S3 and S10. Zn(2+) serves as cofactor.

In terms of biological role, binds 16S rRNA, required for the assembly of 30S particles and may also be responsible for determining the conformation of the 16S rRNA at the A site. The sequence is that of Small ribosomal subunit protein uS14B from Shouchella clausii (strain KSM-K16) (Alkalihalobacillus clausii).